Here is a 103-residue protein sequence, read N- to C-terminus: Integration host factor subunit beta (103 aa).

The disordered stretch occupies residues 59-82; the sequence is RLGRNPKTGESVALPGKHVPHFKP.

It belongs to the bacterial histone-like protein family. As to quaternary structure, heterodimer of an alpha and a beta chain.

Its function is as follows. This protein is one of the two subunits of integration host factor, a specific DNA-binding protein that functions in genetic recombination as well as in transcriptional and translational control. This is Integration host factor subunit beta from Xanthomonas oryzae pv. oryzae (strain MAFF 311018).